We begin with the raw amino-acid sequence, 168 residues long: G/U mismatch-specific DNA glycosylase (168 aa).

Belongs to the uracil-DNA glycosylase (UDG) superfamily. TDG/mug family. In terms of assembly, binds DNA as a monomer.

The protein localises to the cytoplasm. The catalysed reaction is Specifically hydrolyzes mismatched double-stranded DNA and polynucleotides, releasing free uracil.. Functionally, excises ethenocytosine and uracil, which can arise by alkylation or deamination of cytosine, respectively, from the corresponding mispairs with guanine in ds-DNA. It is capable of hydrolyzing the carbon-nitrogen bond between the sugar-phosphate backbone of the DNA and the mispaired base. The complementary strand guanine functions in substrate recognition. Required for DNA damage lesion repair in stationary-phase cells. The sequence is that of G/U mismatch-specific DNA glycosylase from Escherichia coli (strain UTI89 / UPEC).